We begin with the raw amino-acid sequence, 184 residues long: UPF0149 protein PSEEN5316 (184 aa).

Belongs to the UPF0149 family.

This is UPF0149 protein PSEEN5316 from Pseudomonas entomophila (strain L48).